A 746-amino-acid chain; its full sequence is Actin filament-associated protein 1-like 1 (746 aa).

The interval Glu-88–Glu-206 is disordered. Over residues His-98–Asp-107 the composition is skewed to polar residues. A compositionally biased stretch (pro residues) spans Ser-108–Glu-119. Over residues Ser-139–Ser-148 the composition is skewed to low complexity. In terms of domain architecture, PH 1 spans Asp-214–Gly-310. The interval Glu-336–Thr-371 is disordered. Positions Ser-350–Lys-359 are enriched in basic and acidic residues. Residues Arg-406–Gly-497 enclose the PH 2 domain. Disordered stretches follow at residues Glu-539–Gln-596 and Pro-723–Thr-746. The segment covering Ser-562 to Ile-575 has biased composition (polar residues). Residues Gly-591 to Ala-682 adopt a coiled-coil conformation. A compositionally biased stretch (basic and acidic residues) spans Lys-736 to Thr-746.

The protein localises to the cytoplasm. It localises to the cell projection. Its subcellular location is the podosome. It is found in the invadopodium. The protein resides in the cytoskeleton. The protein localises to the stress fiber. In terms of biological role, may be involved in podosome and invadosome formation. This chain is Actin filament-associated protein 1-like 1 (afap1l1), found in Danio rerio (Zebrafish).